The following is a 387-amino-acid chain: Anhydro-N-acetylmuramic acid kinase (387 aa).

17 to 24 (GTSMDGVD) is a binding site for ATP.

It belongs to the anhydro-N-acetylmuramic acid kinase family.

The catalysed reaction is 1,6-anhydro-N-acetyl-beta-muramate + ATP + H2O = N-acetyl-D-muramate 6-phosphate + ADP + H(+). It participates in amino-sugar metabolism; 1,6-anhydro-N-acetylmuramate degradation. Its pathway is cell wall biogenesis; peptidoglycan recycling. Its function is as follows. Catalyzes the specific phosphorylation of 1,6-anhydro-N-acetylmuramic acid (anhMurNAc) with the simultaneous cleavage of the 1,6-anhydro ring, generating MurNAc-6-P. Is required for the utilization of anhMurNAc either imported from the medium or derived from its own cell wall murein, and thus plays a role in cell wall recycling. In Burkholderia pseudomallei (strain K96243), this protein is Anhydro-N-acetylmuramic acid kinase.